Consider the following 248-residue polypeptide: Deoxyribose-phosphate aldolase (248 aa).

D106 functions as the Proton donor/acceptor in the catalytic mechanism. K168 serves as the catalytic Schiff-base intermediate with acetaldehyde. Catalysis depends on K197, which acts as the Proton donor/acceptor.

Belongs to the DeoC/FbaB aldolase family. DeoC type 1 subfamily.

It localises to the cytoplasm. It catalyses the reaction 2-deoxy-D-ribose 5-phosphate = D-glyceraldehyde 3-phosphate + acetaldehyde. It functions in the pathway carbohydrate degradation; 2-deoxy-D-ribose 1-phosphate degradation; D-glyceraldehyde 3-phosphate and acetaldehyde from 2-deoxy-alpha-D-ribose 1-phosphate: step 2/2. In terms of biological role, catalyzes a reversible aldol reaction between acetaldehyde and D-glyceraldehyde 3-phosphate to generate 2-deoxy-D-ribose 5-phosphate. This is Deoxyribose-phosphate aldolase from Rhizobium meliloti (strain 1021) (Ensifer meliloti).